Consider the following 199-residue polypeptide: 3-isopropylmalate dehydratase small subunit (199 aa).

This sequence belongs to the LeuD family. LeuD type 1 subfamily. In terms of assembly, heterodimer of LeuC and LeuD.

It catalyses the reaction (2R,3S)-3-isopropylmalate = (2S)-2-isopropylmalate. It participates in amino-acid biosynthesis; L-leucine biosynthesis; L-leucine from 3-methyl-2-oxobutanoate: step 2/4. In terms of biological role, catalyzes the isomerization between 2-isopropylmalate and 3-isopropylmalate, via the formation of 2-isopropylmaleate. This chain is 3-isopropylmalate dehydratase small subunit, found in Aeromonas salmonicida (strain A449).